The sequence spans 388 residues: Zinc finger C2H2 protein ECU10_0150 (388 aa).

A C2H2-type zinc finger spans residues 299-322 (YKCGFCGKAFESEKFIFNHFNNKH).

This Encephalitozoon cuniculi (strain GB-M1) (Microsporidian parasite) protein is Zinc finger C2H2 protein ECU10_0150.